Reading from the N-terminus, the 95-residue chain is Large ribosomal subunit protein bL28 (95 aa).

Positions 1–28 (MARKRTLGGKAPQAGNKVSHSQRKTRRQ) are disordered.

It belongs to the bacterial ribosomal protein bL28 family.

The chain is Large ribosomal subunit protein bL28 from Magnetococcus marinus (strain ATCC BAA-1437 / JCM 17883 / MC-1).